The chain runs to 332 residues: L-lactate dehydrogenase A chain (332 aa).

A2 bears the N-acetylalanine mark. At K5 the chain carries N6-acetyllysine; alternate. K5 carries the post-translational modification N6-succinyllysine; alternate. N6-acetyllysine is present on K14. G29–K57 is an NAD(+) binding site. N6-acetyllysine; alternate is present on K57. K57 is covalently cross-linked (Glycyl lysine isopeptide (Lys-Gly) (interchain with G-Cter in SUMO2); alternate). K81 is subject to N6-acetyllysine. R99 is an NAD(+) binding site. R106 serves as a coordination point for substrate. K118 is modified (N6-acetyllysine; alternate). At K118 the chain carries N6-succinyllysine; alternate. K126 is subject to N6-acetyllysine. An NAD(+)-binding site is contributed by N138. Residues N138 and R169 each coordinate substrate. H193 serves as the catalytic Proton acceptor. Residues K224 and K232 each carry the N6-acetyllysine modification. Y239 is subject to Phosphotyrosine. N6-acetyllysine is present on K243. T248 contributes to the substrate binding site. Position 309 is a phosphothreonine (T309). S310 is subject to Phosphoserine. K318 is modified (N6-acetyllysine; alternate). K318 carries the N6-succinyllysine; alternate modification. Phosphothreonine is present on T322.

The protein belongs to the LDH/MDH superfamily. LDH family. In terms of assembly, homotetramer. Interacts with PTEN upstream reading frame protein MP31. ISGylated.

It is found in the cytoplasm. It carries out the reaction (S)-lactate + NAD(+) = pyruvate + NADH + H(+). The protein operates within fermentation; pyruvate fermentation to lactate; (S)-lactate from pyruvate: step 1/1. Its function is as follows. Interconverts simultaneously and stereospecifically pyruvate and lactate with concomitant interconversion of NADH and NAD(+). The chain is L-lactate dehydrogenase A chain (LDHA) from Oryctolagus cuniculus (Rabbit).